The sequence spans 306 residues: Agmatinase (306 aa).

His-126, Asp-149, His-151, Asp-153, Asp-230, and Asp-232 together coordinate Mn(2+).

It belongs to the arginase family. Agmatinase subfamily. It depends on Mn(2+) as a cofactor.

It carries out the reaction agmatine + H2O = urea + putrescine. It participates in amine and polyamine biosynthesis; putrescine biosynthesis via agmatine pathway; putrescine from agmatine: step 1/1. Its function is as follows. Catalyzes the formation of putrescine from agmatine. This is Agmatinase from Klebsiella pneumoniae (strain 342).